A 60-amino-acid polypeptide reads, in one-letter code: Potassium channel toxin alpha-KTx 3.6 (60 aa).

The signal sequence occupies residues 1–22 (MKVFFAVLITLFICSMIIGIHG). 3 cysteine pairs are disulfide-bonded: Cys-29–Cys-49, Cys-35–Cys-54, and Cys-39–Cys-56. Lysine amide is present on Lys-59.

Belongs to the short scorpion toxin superfamily. Potassium channel inhibitor family. Alpha-KTx 03 subfamily. As to expression, expressed by the venom gland.

It localises to the secreted. In terms of biological role, blocks voltage-gated potassium channels. At 2 uM, blocks rat Kv1.1/KCNA1 and Kv1.3/KCNA3, has a strong effect on rat Kv1.2/KCNA2 and Kv1.6/KCNA6 as well as a moderate effect on Shaker IR. This is Potassium channel toxin alpha-KTx 3.6 from Olivierus martensii (Manchurian scorpion).